Here is a 490-residue protein sequence, read N- to C-terminus: Betaine aldehyde dehydrogenase (490 aa).

Residues I27 and D93 each contribute to the K(+) site. 150-152 (GAW) lines the NAD(+) pocket. K162 (charge relay system) is an active-site residue. 176–179 (KPSE) is a binding site for NAD(+). V180 is a K(+) binding site. 230–233 (GTDT) provides a ligand contact to NAD(+). L246 lines the K(+) pocket. Residue E252 is the Proton acceptor of the active site. Residues G254, C286, and E387 each contribute to the NAD(+) site. C286 serves as the catalytic Nucleophile. Position 286 is a cysteine sulfenic acid (-SOH) (C286). K457 and G460 together coordinate K(+). The active-site Charge relay system is E464.

This sequence belongs to the aldehyde dehydrogenase family. Dimer of dimers. K(+) serves as cofactor.

The enzyme catalyses betaine aldehyde + NAD(+) + H2O = glycine betaine + NADH + 2 H(+). It participates in amine and polyamine biosynthesis; betaine biosynthesis via choline pathway; betaine from betaine aldehyde: step 1/1. Functionally, involved in the biosynthesis of the osmoprotectant glycine betaine. Catalyzes the irreversible oxidation of betaine aldehyde to the corresponding acid. In Pseudomonas fluorescens (strain Pf0-1), this protein is Betaine aldehyde dehydrogenase.